Reading from the N-terminus, the 326-residue chain is Zinc transporter 11 (326 aa).

An N-terminal signal peptide occupies residues 1 to 20 (MSRSLVFFFLFLVLVVPCLS). Over 21–49 (HGTGGDHDDDEASHVKSSDLKSKSLISVK) the chain is Extracellular. A helical membrane pass occupies residues 50–70 (IACLVIIFVLTFISGVSPYFL). Topologically, residues 71–75 (KWSQG) are cytoplasmic. Residues 76 to 96 (FLVLGTQFAGGVFLATALMHF) traverse the membrane as a helical segment. At 97–121 (LSDADETFRGLLTAEGESEPSPAYP) the chain is on the extracellular side. The chain crosses the membrane as a helical span at residues 122–142 (FAYMLACAGFMLTMLADSVIA). Residues 143 to 174 (HIYSKTQNDLELQGEDKSNQRSATTETSIGDS) are Cytoplasmic-facing. The chain crosses the membrane as a helical span at residues 175–195 (ILLIVALCFHSVFEGIAIGIS). Topologically, residues 196–203 (ETKSDAWR) are extracellular. A helical membrane pass occupies residues 204–224 (ALWTITLHKIFAAIAMGIALL). The Cytoplasmic segment spans residues 225-235 (RMIPDRPLFSS). Residues 236–256 (ITYSFAFAISSPIGVAIGIVI) form a helical membrane-spanning segment. The Extracellular segment spans residues 257 to 262 (DATTQG). A helical transmembrane segment spans residues 263–283 (SIADWIFALSMSLACGVFVYV). Topologically, residues 284–305 (SVNHLLAKGYRPNKKVHVDEPR) are cytoplasmic. Residues 306-326 (YKFLAVLFGVVVIAIVMIWDT) form a helical membrane-spanning segment.

Belongs to the ZIP transporter (TC 2.A.5) family.

The protein localises to the cell membrane. In terms of biological role, probably mediates zinc uptake from the rhizosphere. In Arabidopsis thaliana (Mouse-ear cress), this protein is Zinc transporter 11 (ZIP11).